Consider the following 467-residue polypeptide: Chromosomal replication initiator protein DnaA (467 aa).

The domain I, interacts with DnaA modulators stretch occupies residues 1-79 (MTELDQFWPA…GELPVELRLG (79 aa)). The interval 79–129 (GAPTARPAAPVAGNSQPKAKEPAKAAASAPAAPSPAKQAAVKAIGGSHEST) is domain II. Positions 84–126 (RPAAPVAGNSQPKAKEPAKAAASAPAAPSPAKQAAVKAIGGSH) are disordered. Low complexity predominate over residues 102–121 (KAAASAPAAPSPAKQAAVKA). The interval 130-347 (RLNPSFTFDT…GALKRVVAYA (218 aa)) is domain III, AAA+ region. Gly-175, Gly-177, Lys-178, and Thr-179 together coordinate ATP. The segment at 348–467 (RFTSQNITLE…YEALLSMLRN (120 aa)) is domain IV, binds dsDNA.

This sequence belongs to the DnaA family. As to quaternary structure, oligomerizes as a right-handed, spiral filament on DNA at oriC.

Its subcellular location is the cytoplasm. Its function is as follows. Plays an essential role in the initiation and regulation of chromosomal replication. ATP-DnaA binds to the origin of replication (oriC) to initiate formation of the DNA replication initiation complex once per cell cycle. Binds the DnaA box (a 9 base pair repeat at the origin) and separates the double-stranded (ds)DNA. Forms a right-handed helical filament on oriC DNA; dsDNA binds to the exterior of the filament while single-stranded (ss)DNA is stabiized in the filament's interior. The ATP-DnaA-oriC complex binds and stabilizes one strand of the AT-rich DNA unwinding element (DUE), permitting loading of DNA polymerase. After initiation quickly degrades to an ADP-DnaA complex that is not apt for DNA replication. Binds acidic phospholipids. The protein is Chromosomal replication initiator protein DnaA of Chromobacterium violaceum (strain ATCC 12472 / DSM 30191 / JCM 1249 / CCUG 213 / NBRC 12614 / NCIMB 9131 / NCTC 9757 / MK).